Reading from the N-terminus, the 352-residue chain is Matrix protein (352 aa).

The disordered stretch occupies residues 1-22; sequence MEPDIKSISSESMEGVSDFSPS. The Nuclear export signal 1 signature appears at 106-115; that stretch reads LLEELCSLKV. The short motif at 244–258 is the Nuclear localization signal element; sequence RRAGKYYSVDYCRRK. A Nuclear export signal 2 motif is present at residues 268-276; the sequence is LGSIGGLSL.

Belongs to the morbillivirus/respirovirus/rubulavirus M protein family. Homomultimer. Interacts with host TRIM6; this interaction inhibits the IKBKE-dependent activation of the type I interferon signaling pathway. Interacts with host ANP32B; this interaction promotes M nuclear localization. Ubiquitinated; regulates matrix nuclear export.

The protein localises to the virion. It is found in the host cytoplasm. The protein resides in the host cell membrane. Its subcellular location is the host nucleus. Plays a crucial role in virion assembly and budding. Forms a shell at the inner face of the plasma membrane. Transits through the host nucleus before gaining the functional ability to localize and bud from the plasma membrane. Mediates together with fusion protein the incorporation of the glycoprotein to the viral particles. Also participates in the inhibition of the host interferon type I antiviral response by interacting with and thereby inhibiting host TRIM6. The protein is Matrix protein (M) of Cynopterus brachyotis (Lesser short-nosed fruit bat).